The primary structure comprises 131 residues: Small ribosomal subunit protein uS8 (131 aa).

The protein belongs to the universal ribosomal protein uS8 family. Part of the 30S ribosomal subunit. Contacts proteins S5 and S12.

Its function is as follows. One of the primary rRNA binding proteins, it binds directly to 16S rRNA central domain where it helps coordinate assembly of the platform of the 30S subunit. The protein is Small ribosomal subunit protein uS8 of Janthinobacterium sp. (strain Marseille) (Minibacterium massiliensis).